Reading from the N-terminus, the 204-residue chain is MTFKGFSKKDFKTMQIPGLDARMAGIQNDIQPKFKAVGEELTTYLSAKLGDEMFLHIARHQRRSVNPPESTWLAICHDKRGYKKHPHFQVGLFDNYLFIWLAFIYENEESTKIANRFLKEKKLLAELPDTFAISPDHTEEKTYPVHGGQLDATLKRFRDVKKGEFLVGKIYLPDDNHLSPGKDFIKEAEMVLDELIPLYKAALQ.

It belongs to the UPF0637 family.

In Listeria innocua serovar 6a (strain ATCC BAA-680 / CLIP 11262), this protein is UPF0637 protein lin1053.